The following is a 181-amino-acid chain: Ribonuclease HII (181 aa).

In terms of domain architecture, RNase H type-2 spans 1-181 (MICGIDEVGR…NLHRRSFKFI (181 aa)). Aspartate 6, glutamate 7, and aspartate 98 together coordinate a divalent metal cation.

The protein belongs to the RNase HII family. Requires Mn(2+) as cofactor. Mg(2+) serves as cofactor.

It is found in the cytoplasm. It catalyses the reaction Endonucleolytic cleavage to 5'-phosphomonoester.. Endonuclease that specifically degrades the RNA of RNA-DNA hybrids. This chain is Ribonuclease HII, found in Borrelia hermsii (strain HS1 / DAH).